Here is a 290-residue protein sequence, read N- to C-terminus: MTLRTITLIAGPTASGKSELALQMAQEKNALIINADSMQVYDVLNILTARPREADTAIVPHYLYGHVSPTLNYSVGQWLCDVEKLLVTFTSRSVIFVGGTGLYFRALLEGISKIPHVPDVVRQKWRLLLNKEGAESLYRQLLQIDAVVAEKISSQDGQRIVRALEVYDATGEKLSWWQKQKTTPLIAPSRAEKILLMRPRALLYERIHKRLDSMIERGVLEEVVAMKKLMLSPSLPVMKAIGIPEFMAYLDGYRSFENALEAAKTQTRRYAKRQMTWFRHQFDEEWMLTS.

11 to 18 (GPTASGKS) is an ATP binding site. A substrate-binding site is contributed by 13 to 18 (TASGKS). Interaction with substrate tRNA stretches follow at residues 36 to 39 (DSMQ) and 158 to 162 (QRIVR).

This sequence belongs to the IPP transferase family. In terms of assembly, monomer. Mg(2+) serves as cofactor.

The enzyme catalyses adenosine(37) in tRNA + dimethylallyl diphosphate = N(6)-dimethylallyladenosine(37) in tRNA + diphosphate. Its function is as follows. Catalyzes the transfer of a dimethylallyl group onto the adenine at position 37 in tRNAs that read codons beginning with uridine, leading to the formation of N6-(dimethylallyl)adenosine (i(6)A). In Bartonella tribocorum (strain CIP 105476 / IBS 506), this protein is tRNA dimethylallyltransferase.